A 505-amino-acid polypeptide reads, in one-letter code: Zealexin A1 synthase (505 aa).

The helical transmembrane segment at 7–26 threads the bilayer; the sequence is IAVGTVAVVAVLSKLKSAVT. Residue Cys-442 participates in heme binding.

This sequence belongs to the cytochrome P450 family. The cofactor is heme.

The protein resides in the membrane. It catalyses the reaction (S)-beta-macrocarpene + 3 reduced [NADPH--hemoprotein reductase] + 3 O2 = zealexin A1 + 3 oxidized [NADPH--hemoprotein reductase] + 4 H2O + 4 H(+). Functionally, involved in production of the antifungal phytoalexin zealexin A1. The enzyme sequentially oxidizes(S)-beta-macrocarpene via alcohol and aldehyde intermediates to form zealexin A1, a maize phytoalexin that provides biochemical protection against fungal infection. The protein is Zealexin A1 synthase of Zea mays (Maize).